A 277-amino-acid chain; its full sequence is uncharacterized protein (277 aa).

2 disordered regions span residues Lys-33–Arg-168 and Asn-210–Phe-277. Residues Asn-34 to Ser-45 show a composition bias toward basic and acidic residues. Over residues Leu-86–Ser-99 the composition is skewed to basic residues. Basic and acidic residues-rich tracts occupy residues Lys-100–Val-113, Ala-151–Arg-168, and Thr-216–Lys-230. Residues Asp-231–Arg-241 show a composition bias toward basic residues. Positions Arg-242–Asn-258 are enriched in basic and acidic residues. Residues Lys-259–Asn-271 show a composition bias toward polar residues.

The protein resides in the cytoplasm. This is an uncharacterized protein from Saccharomyces cerevisiae (strain ATCC 204508 / S288c) (Baker's yeast).